Reading from the N-terminus, the 66-residue chain is Toxin Aah6 (66 aa).

One can recognise an LCN-type CS-alpha/beta domain in the interval 2 to 65 (RDGYVVKNGT…LYGDDGTYCS (64 aa)). Asn-9 carries N-linked (GlcNAc...) asparagine glycosylation. Cystine bridges form between Cys-13–Cys-64, Cys-17–Cys-40, Cys-26–Cys-45, and Cys-30–Cys-47.

Belongs to the long (4 C-C) scorpion toxin superfamily. Sodium channel inhibitor family. Beta subfamily. Post-translationally, N-glycans are core-fucosylated, heterogeneous and short which could be the result of extensive trimming. As to expression, expressed by the venom gland.

The protein localises to the secreted. In terms of biological role, beta toxins bind voltage-independently at site-4 of sodium channels and shift the voltage of activation toward more negative potentials thereby affecting sodium channel activation and promoting spontaneous and repetitive firing. This toxin is active only on insects. This toxin has very low anti-insect activity. The protein is Toxin Aah6 of Androctonus australis (Sahara scorpion).